The chain runs to 349 residues: Isopentenyl-diphosphate delta-isomerase (349 aa).

Residue 8-9 (RK) coordinates substrate. Residues serine 66, 67 to 69 (SMT), serine 97, and asparagine 125 each bind FMN. 97 to 99 (STR) contacts substrate. Glutamine 160 is a substrate binding site. Glutamate 161 lines the Mg(2+) pocket. FMN is bound by residues lysine 192, threonine 222, 272-274 (GMK), and 293-294 (AR).

It belongs to the IPP isomerase type 2 family. As to quaternary structure, homooctamer. Dimer of tetramers. Requires FMN as cofactor. The cofactor is NADPH. Mg(2+) serves as cofactor.

It is found in the cytoplasm. The enzyme catalyses isopentenyl diphosphate = dimethylallyl diphosphate. Functionally, involved in the biosynthesis of isoprenoids. Catalyzes the 1,3-allylic rearrangement of the homoallylic substrate isopentenyl (IPP) to its allylic isomer, dimethylallyl diphosphate (DMAPP). This is Isopentenyl-diphosphate delta-isomerase from Oceanobacillus iheyensis (strain DSM 14371 / CIP 107618 / JCM 11309 / KCTC 3954 / HTE831).